Consider the following 432-residue polypeptide: 2-oxoglutarate-dependent dioxygenase AOP2 (432 aa).

The region spanning 281-378 (SGDDVEANDD…RYTAAIFTCP (98 aa)) is the Fe2OG dioxygenase domain. Residues H301, D303, and H358 each coordinate Fe cation. Position 369 (R369) interacts with 2-oxoglutarate.

This sequence belongs to the iron/ascorbate-dependent oxidoreductase family. Fe(2+) serves as cofactor.

Functionally, 2-oxoglutarate-dependent dioxygenase involved in glucosinolates biosynthesis. Catalyzes the conversion of methylsulfinylalkyl glucosinolates to alkenyl glucosinolates. The polypeptide is 2-oxoglutarate-dependent dioxygenase AOP2 (AOP2) (Arabidopsis thaliana (Mouse-ear cress)).